We begin with the raw amino-acid sequence, 205 residues long: dITP/XTP pyrophosphatase (205 aa).

Residue 7 to 12 coordinates substrate; sequence SNNRGK. Glu39 and Asp68 together coordinate Mg(2+). Catalysis depends on Asp68, which acts as the Proton acceptor. Substrate contacts are provided by residues Ala69, 154-157, Lys177, and 182-183; these read FGFD and HR.

The protein belongs to the HAM1 NTPase family. Homodimer. The cofactor is Mg(2+).

The catalysed reaction is XTP + H2O = XMP + diphosphate + H(+). It carries out the reaction dITP + H2O = dIMP + diphosphate + H(+). The enzyme catalyses ITP + H2O = IMP + diphosphate + H(+). In terms of biological role, pyrophosphatase that catalyzes the hydrolysis of nucleoside triphosphates to their monophosphate derivatives, with a high preference for the non-canonical purine nucleotides XTP (xanthosine triphosphate), dITP (deoxyinosine triphosphate) and ITP. Seems to function as a house-cleaning enzyme that removes non-canonical purine nucleotides from the nucleotide pool, thus preventing their incorporation into DNA/RNA and avoiding chromosomal lesions. This is dITP/XTP pyrophosphatase from Acidovorax ebreus (strain TPSY) (Diaphorobacter sp. (strain TPSY)).